Here is a 114-residue protein sequence, read N- to C-terminus: Probable 4-amino-4-deoxy-L-arabinose-phosphoundecaprenol flippase subunit ArnE (114 aa).

Transmembrane regions (helical) follow at residues 38–58 (LTLR…LLWL), 64–84 (LPLS…TLAA), and 94–114 (LRHW…SWHL). An EamA domain is found at 43-112 (LAIAVVSLGL…IMFGILLMSW (70 aa)).

Belongs to the ArnE family. In terms of assembly, heterodimer of ArnE and ArnF.

It is found in the cell inner membrane. It participates in bacterial outer membrane biogenesis; lipopolysaccharide biosynthesis. Functionally, translocates 4-amino-4-deoxy-L-arabinose-phosphoundecaprenol (alpha-L-Ara4N-phosphoundecaprenol) from the cytoplasmic to the periplasmic side of the inner membrane. This chain is Probable 4-amino-4-deoxy-L-arabinose-phosphoundecaprenol flippase subunit ArnE, found in Yersinia pseudotuberculosis serotype O:3 (strain YPIII).